The sequence spans 452 residues: MRLSRYFLPVLKETPAEAQIVSHRLMLRAGMIKQASAGIYSWLPLGYKVLKRIERIVHEEQIRAGHIPMLMPTLQSADLWQKSGRFDAYGPEMLRLKDRHDRDMLYGPTNEEMITDMVGTFVTSYKSLPLTLYHIQWKFRDEVRPRFGVMRGREFLMKDGYNFDLTKEAALHAYNRHLVSYLRTYERMGLQAIPMRADSGPIGGDYTHEFLVLADTGESEVFYDAEITDLKFGDREIDYDDVAQCDAVLQEFTSRYARTDETHDEAEFAAIPGDRQRSARGIEVGQIFYFGTEYSEKLGAHVQNDEGERVPLHMGSHGIGVSRLLGAIIEASHDDKGIIWPEGVTPFHCGIVNLKQGDAEADAACEALETALENAGLEPLYDDRNERAGGKFATMDLIGLPWRITVGPRGLKNGVVELTSRRTGESEELTPDAAVARVAEVYAAHKPVNAAV.

This sequence belongs to the class-II aminoacyl-tRNA synthetase family. ProS type 2 subfamily. Homodimer.

It localises to the cytoplasm. It carries out the reaction tRNA(Pro) + L-proline + ATP = L-prolyl-tRNA(Pro) + AMP + diphosphate. Its function is as follows. Catalyzes the attachment of proline to tRNA(Pro) in a two-step reaction: proline is first activated by ATP to form Pro-AMP and then transferred to the acceptor end of tRNA(Pro). The chain is Proline--tRNA ligase from Jannaschia sp. (strain CCS1).